A 129-amino-acid chain; its full sequence is N16.2 matrix protein (129 aa).

A signal peptide spans 1-23 (MKCTLRWTITALVLLGICHLARP). Tandem repeats lie at residues 91–92 (NG), 93–94 (NG), 95–96 (DG), 97–98 (NG), and 99–100 (NG). Positions 91 to 100 (NGNGDGNGNG) are 5 X 2 AA tandem repeats of N-G.

Belongs to the N16 matrix protein family. In terms of assembly, heterooligomer; disulfide-linked. Pif97, Pif80, N16 and other proteins form a complex. Component of conchiolin, the organic matrix of nacre. Expressed at extremely high levels in the dorsal region of the mantle, which region may be responsible for the nacreous layer formation, but only in trace amounts at the mantle edge, which region may be responsible for the prismatic layer formation.

The protein localises to the secreted. The protein resides in the extracellular space. It is found in the extracellular matrix. Its function is as follows. May be specifically involved in the formation of the nacreous layer. The polypeptide is N16.2 matrix protein (Pinctada fucata (Akoya pearl oyster)).